The sequence spans 88 residues: Small ribosomal subunit protein bS20 (88 aa).

The tract at residues 1–27 (MANSKSAKKRALQSEKRRQHNASRRSM) is disordered.

The protein belongs to the bacterial ribosomal protein bS20 family.

In terms of biological role, binds directly to 16S ribosomal RNA. The sequence is that of Small ribosomal subunit protein bS20 from Shewanella denitrificans (strain OS217 / ATCC BAA-1090 / DSM 15013).